An 841-amino-acid chain; its full sequence is MPLRRFSPGLKAQFAFGMVFLFVQPDASAADISAQQIGGVIIPQAFSQALQDGMSVPLYIHLAGSQGRQDDQRIGSAFIWLDDGQLRIRKIQLEESEDNASVSEQTRQQLMALANAPFNEALTIPLTDNAQLDLSLRQLLLQLVVKREALGTVLRSRSEDIGQSSVNTLSSNLSYNFGIYNNQLRNGGSNTSSYLSLNNVTALREHHVVLDGSLYGIGSGQQDSELYKAMYERDFAGHRFAGGTLDTWNLQSLGPMTAISAGKIYGLSWGNQASSTIFDSSQSATPVIAFLPAAGEVHLTRDGRLLSVQNFTMGNHEVDTRGLPYGIYDVEVEVIVNGRVISKRTQRVNKLFSRGRGVGAPLAWQVWGGSFHMDRWSENGKKTRPAKESWLAGASTSGSLSTLSWAATGYGYDNQAVGETRLTLPLGGAINVNLQNMLASDSSWSSIGSISATLPGGFSSLWVNQEKTRIGNQLRRSDADNRAIGGTLNLNSLWSKLGTFSISYNDDRRYNSHYYTADYYQNVYSGTFGSLGLRAGIQRYNNGDSNANTGKYIALDLSLPLGNWFSAGMTHQNGYTMANLSARKQFDEGTIRTVGANLSRAISGDTGDDKTLSGGAYAQFDARYASGTLNVNSAADGYVNTNLTANGSVGWQGKNIAASGRTDGNAGVIFNTGLEDDGQISAKINGRIFPLNGKRNYLPLSPYGRYEVELQNSKNSLDSYDIVSGRKSHLTLYPGNVAVIEPEVKQMVTVSGRIRAEDGTLLANARINNHIGRTRTDENGEFVMDVDKKYPTIDFRYSGNKTCEVALELNQARGAVWVGDVVCSGLSSWAAVTQTGEENES.

Positions 1–29 (MPLRRFSPGLKAQFAFGMVFLFVQPDASA) are cleaved as a signal peptide.

Belongs to the EcpC/MatD family.

Part of the ecpRABCDE operon, which encodes the E.coli common pilus (ECP). ECP is found in both commensal and pathogenic strains and plays a dual role in early-stage biofilm development and host cell recognition. This Escherichia coli O157:H7 protein is Probable outer membrane usher protein EcpC (ecpC).